The sequence spans 299 residues: Pyrroline-5-carboxylate reductase 2 (299 aa).

The protein belongs to the pyrroline-5-carboxylate reductase family. As to quaternary structure, homodecamer; composed of 5 homodimers.

The enzyme catalyses L-proline + NADP(+) = (S)-1-pyrroline-5-carboxylate + NADPH + 2 H(+). It carries out the reaction L-proline + NAD(+) = (S)-1-pyrroline-5-carboxylate + NADH + 2 H(+). It functions in the pathway amino-acid biosynthesis; L-proline biosynthesis; L-proline from L-glutamate 5-semialdehyde: step 1/1. This is Pyrroline-5-carboxylate reductase 2 (pycr2) from Dictyostelium discoideum (Social amoeba).